Here is a 118-residue protein sequence, read N- to C-terminus: Large ribosomal subunit protein bL20 (118 aa).

This sequence belongs to the bacterial ribosomal protein bL20 family.

In terms of biological role, binds directly to 23S ribosomal RNA and is necessary for the in vitro assembly process of the 50S ribosomal subunit. It is not involved in the protein synthesizing functions of that subunit. The polypeptide is Large ribosomal subunit protein bL20 (Edwardsiella ictaluri (strain 93-146)).